A 1578-amino-acid polypeptide reads, in one-letter code: DNA-directed RNA polymerase subunit beta' (1578 aa).

The Zn(2+) site is built by C101, C103, C115, and C118. Residues D1286, D1288, and D1290 each contribute to the Mg(2+) site.

It belongs to the RNA polymerase beta' chain family. RpoC1 subfamily. In plastids the minimal PEP RNA polymerase catalytic core is composed of four subunits: alpha, beta, beta', and beta''. When a (nuclear-encoded) sigma factor is associated with the core the holoenzyme is formed, which can initiate transcription. The cofactor is Mg(2+). Requires Zn(2+) as cofactor.

It localises to the plastid. The protein resides in the chloroplast. The enzyme catalyses RNA(n) + a ribonucleoside 5'-triphosphate = RNA(n+1) + diphosphate. Its function is as follows. DNA-dependent RNA polymerase catalyzes the transcription of DNA into RNA using the four ribonucleoside triphosphates as substrates. This Tupiella akineta (Green alga) protein is DNA-directed RNA polymerase subunit beta'.